A 297-amino-acid polypeptide reads, in one-letter code: Tyrosine recombinase XerD (297 aa).

The Core-binding (CB) domain maps to 1-86 (MKDSALIELF…AMRKLFQYLY (86 aa)). Residues 107-291 (RLPKYLTEQQ…AKERLKHLHE (185 aa)) enclose the Tyr recombinase domain. Active-site residues include R147, K171, H243, R246, and H269. The O-(3'-phospho-DNA)-tyrosine intermediate role is filled by Y278.

This sequence belongs to the 'phage' integrase family. XerD subfamily. As to quaternary structure, forms a cyclic heterotetrameric complex composed of two molecules of XerC and two molecules of XerD.

The protein localises to the cytoplasm. Its function is as follows. Site-specific tyrosine recombinase, which acts by catalyzing the cutting and rejoining of the recombining DNA molecules. The XerC-XerD complex is essential to convert dimers of the bacterial chromosome into monomers to permit their segregation at cell division. It also contributes to the segregational stability of plasmids. This chain is Tyrosine recombinase XerD, found in Pasteurella multocida (strain Pm70).